Here is a 170-residue protein sequence, read N- to C-terminus: Adenine phosphoribosyltransferase (170 aa).

This sequence belongs to the purine/pyrimidine phosphoribosyltransferase family. In terms of assembly, homodimer.

It localises to the cytoplasm. The enzyme catalyses AMP + diphosphate = 5-phospho-alpha-D-ribose 1-diphosphate + adenine. It functions in the pathway purine metabolism; AMP biosynthesis via salvage pathway; AMP from adenine: step 1/1. Catalyzes a salvage reaction resulting in the formation of AMP, that is energically less costly than de novo synthesis. The protein is Adenine phosphoribosyltransferase of Lactococcus lactis subsp. cremoris (strain SK11).